We begin with the raw amino-acid sequence, 201 residues long: UPF0301 protein Avi_1069 (201 aa).

The protein belongs to the UPF0301 (AlgH) family.

In Allorhizobium ampelinum (strain ATCC BAA-846 / DSM 112012 / S4) (Agrobacterium vitis (strain S4)), this protein is UPF0301 protein Avi_1069.